We begin with the raw amino-acid sequence, 142 residues long: Large ribosomal subunit protein uL23 (142 aa).

The protein belongs to the universal ribosomal protein uL23 family.

Functionally, this protein binds to a specific region on the 26S rRNA. The protein is Large ribosomal subunit protein uL23 (RPL25) of Cyberlindnera jadinii (Torula yeast).